The primary structure comprises 373 residues: Beta sliding clamp homolog GriR (373 aa).

This sequence belongs to the beta sliding clamp family. Forms a ring-shaped head-to-tail homodimer around DNA which binds and tethers DNA polymerases and other proteins to the DNA. The DNA replisome complex has a single clamp-loading complex (3 tau and 1 each of delta, delta', psi and chi subunits) which binds 3 Pol III cores (1 core on the leading strand and 2 on the lagging strand) each with a beta sliding clamp dimer. Additional proteins in the replisome are other copies of gamma, psi and chi, Ssb, DNA helicase and RNA primase.

It is found in the cytoplasm. A homolog of the beta sliding clamp protein encoded within the biosynthetic cluster for griselimycin synthesis. Upon expression in S.coelicolor A3(2), which is susceptible to this antibiotic, confers resistance to griselimycin. The beta sliding clamp confers DNA tethering and processivity to DNA polymerases and other proteins. Acts as a clamp, forming a ring around DNA (a reaction catalyzed by the clamp-loading complex) which diffuses in an ATP-independent manner freely and bidirectionally along dsDNA. Initially characterized for its ability to contact the catalytic subunit of DNA polymerase III (Pol III), a complex, multichain enzyme responsible for most of the replicative synthesis in bacteria; Pol III exhibits 3'-5' exonuclease proofreading activity. The beta chain is required for initiation of replication as well as for processivity of DNA replication. The polypeptide is Beta sliding clamp homolog GriR (Streptomyces muensis).